The sequence spans 164 residues: RNA pyrophosphohydrolase (164 aa).

A Nudix hydrolase domain is found at 12–158 (RYRQCAGVML…KREVYRAVVK (147 aa)). A Nudix box motif is present at residues 47 to 68 (GGIDPGETQQEAAMRELEEETG).

This sequence belongs to the Nudix hydrolase family. RppH subfamily. It depends on a divalent metal cation as a cofactor.

In terms of biological role, accelerates the degradation of transcripts by removing pyrophosphate from the 5'-end of triphosphorylated RNA, leading to a more labile monophosphorylated state that can stimulate subsequent ribonuclease cleavage. The chain is RNA pyrophosphohydrolase from Erythrobacter litoralis (strain HTCC2594).